A 918-amino-acid chain; its full sequence is Cell surface glycoprotein 1 (918 aa).

Positions Met1–Ala34 are cleaved as a signal peptide. Asn37, Asn56, Asn110, Asn219, Asn250, Asn261, and Asn291 each carry an N-linked (GlcNAc...) asparagine glycan. N-linked (GalNAc...) asparagine glycosylation is present at Asn306. 14 N-linked (GlcNAc...) asparagine glycosylation sites follow: Asn318, Asn343, Asn392, Asn434, Asn487, Asn541, Asn555, Asn572, Asn585, Asn614, Asn715, Asn776, Asn836, and Asn845. The tract at residues His815–Gly894 is disordered. The span at Tyr833 to Val846 shows a compositional bias: polar residues. The span at Val849 to Asp875 shows a compositional bias: acidic residues. A helical transmembrane segment spans residues Gly894–Val914. Positions Pro895–Phe897 match the PGF sorting signal motif.

The protein belongs to the halobacterial S-layer protein family. Post-translationally, N-glycosylated on Asn-306; this N-linked glycan is a branched trisaccharide containing 2-amino-6-sulfo-2,6-dideoxy-glucose (sulfoquinovosamine). Cleaved by the archaeosortase ArtA at the C-terminus, with removal of a short hydrophobic segment. In terms of processing, lipidation.

The protein resides in the secreted. The protein localises to the cell wall. It is found in the S-layer. Its subcellular location is the cell membrane. Its function is as follows. S-layer protein. The S-layer is a paracrystalline mono-layered assembly of proteins which coat the surface of the cell. In H.hispanica, the S-layer contains two different glycoproteins, Slg1 and Slg2, which share highly similar amino acid sequences. The protein is Cell surface glycoprotein 1 of Haloarcula hispanica (strain ATCC 33960 / DSM 4426 / JCM 8911 / NBRC 102182 / NCIMB 2187 / VKM B-1755).